The chain runs to 638 residues: Chaperone protein DnaK (638 aa).

Thr200 is subject to Phosphothreonine; by autocatalysis. Positions 598–621 (SLHMAATAEQQSGSTGAGAGASAK) are disordered.

It belongs to the heat shock protein 70 family.

In terms of biological role, acts as a chaperone. The polypeptide is Chaperone protein DnaK (Xylella fastidiosa (strain M23)).